The chain runs to 270 residues: Probable feruloyl esterase C (270 aa).

The N-terminal stretch at 1 to 22 (MAILSRLLTTVTLGSLLTSAVA) is a signal peptide.

Belongs to the faeC family.

The protein localises to the secreted. The enzyme catalyses feruloyl-polysaccharide + H2O = ferulate + polysaccharide.. Involved in degradation of plant cell walls. Hydrolyzes the feruloyl-arabinose ester bond in arabinoxylans, and the feruloyl-galactose ester bond in pectin. Active against paranitrophenyl-acetate, methyl ferulate and wheat arabinoxylan. The polypeptide is Probable feruloyl esterase C (faeC) (Aspergillus terreus (strain NIH 2624 / FGSC A1156)).